The sequence spans 76 residues: Putative cation transport regulator ChaB (76 aa).

It belongs to the ChaB family. As to quaternary structure, monomer.

Functionally, might be a regulator of the sodium-potassium/proton antiporter ChaA. The protein is Putative cation transport regulator ChaB of Escherichia coli O157:H7.